The primary structure comprises 382 residues: Homoserine O-acetyltransferase (382 aa).

The segment at 1–20 is disordered; sequence MSTDQSPCPSATGAELLPPP. The AB hydrolase-1 domain occupies 59 to 363; the sequence is NVVLVEHALT…RDGHDGFLTE (305 aa). Serine 164 functions as the Nucleophile in the catalytic mechanism. Substrate is bound at residue arginine 234. Residues aspartate 327 and histidine 357 contribute to the active site. Aspartate 358 serves as a coordination point for substrate.

Belongs to the AB hydrolase superfamily. MetX family. As to quaternary structure, homodimer.

It is found in the cytoplasm. It carries out the reaction L-homoserine + acetyl-CoA = O-acetyl-L-homoserine + CoA. The protein operates within amino-acid biosynthesis; L-methionine biosynthesis via de novo pathway; O-acetyl-L-homoserine from L-homoserine: step 1/1. Transfers an acetyl group from acetyl-CoA to L-homoserine, forming acetyl-L-homoserine. This is Homoserine O-acetyltransferase from Nocardia farcinica (strain IFM 10152).